Reading from the N-terminus, the 605-residue chain is Protein spinster (605 aa).

The segment at 1 to 94 is disordered; it reads MSLKHQKQSY…HPLGEHHHIP (94 aa). Low complexity predominate over residues 27–38; the sequence is SSGSSGSSSSEE. The segment covering 55–67 has biased composition (polar residues); that stretch reads TTYSSQQLMPSDT. Over residues 76–85 the composition is skewed to basic residues; that stretch reads RLRPHHHHHH. The helical transmembrane segment at 115–137 threads the bilayer; it reads FTVTVLCFVNLINYMDRFTIAGV. An N-linked (GlcNAc...) asparagine glycan is attached at Asn-149. 5 consecutive transmembrane segments (helical) span residues 153–173, 180–200, 203–223, 240–260, and 271–291; these read GLLQ…FGYL, PWIM…GSFM, FGWF…YSTI, MLAL…IVGS, and WALR…LLIK. The N-linked (GlcNAc...) asparagine glycan is linked to Asn-319. Transmembrane regions (helical) follow at residues 329–349, 367–387, 401–421, 431–451, and 465–485; these read FTCV…FIYL, FNFG…GSFL, VICA…CLLV, LIFF…DILL, and FQIL…VGAI. N-linked (GlcNAc...) asparagine glycosylation occurs at Asn-519. The chain crosses the membrane as a helical span at residues 558–578; that stretch reads STSFVEVLGGIFFIFTACFII. N-linked (GlcNAc...) asparagine glycosylation is present at Asn-583.

Belongs to the major facilitator superfamily. Spinster (TC 2.A.1.49) family. Enriched in brain (at protein level).

It localises to the late endosome membrane. Its subcellular location is the lysosome membrane. In terms of biological role, probable sphingolipid transporter that plays a central role in endosomes and/or lysosomes storage. Involved in TGF-beta-mediated synaptic growth regulation both pre- and postsynaptically via its function in endosomal storage regulation. Also required during oogenesis by regulating yolk spheres storage. This is Protein spinster (spin) from Drosophila melanogaster (Fruit fly).